We begin with the raw amino-acid sequence, 946 residues long: Isoleucine--tRNA ligase (946 aa).

The 'HIGH' region motif lies at 58–68 (PYANGSIHIGH). E568 is a binding site for L-isoleucyl-5'-AMP. Positions 609–613 (KMSKS) match the 'KMSKS' region motif. K612 provides a ligand contact to ATP. Residues C908, C911, C928, and C931 each coordinate Zn(2+).

It belongs to the class-I aminoacyl-tRNA synthetase family. IleS type 1 subfamily. As to quaternary structure, monomer. The cofactor is Zn(2+).

It localises to the cytoplasm. The enzyme catalyses tRNA(Ile) + L-isoleucine + ATP = L-isoleucyl-tRNA(Ile) + AMP + diphosphate. Its function is as follows. Catalyzes the attachment of isoleucine to tRNA(Ile). As IleRS can inadvertently accommodate and process structurally similar amino acids such as valine, to avoid such errors it has two additional distinct tRNA(Ile)-dependent editing activities. One activity is designated as 'pretransfer' editing and involves the hydrolysis of activated Val-AMP. The other activity is designated 'posttransfer' editing and involves deacylation of mischarged Val-tRNA(Ile). This chain is Isoleucine--tRNA ligase, found in Chromohalobacter salexigens (strain ATCC BAA-138 / DSM 3043 / CIP 106854 / NCIMB 13768 / 1H11).